The following is a 513-amino-acid chain: 2-isopropylmalate synthase (513 aa).

One can recognise a Pyruvate carboxyltransferase domain in the interval 5–268 (LIIFDTTLRD…DLRVDTSQIV (264 aa)). Residues Asp14, His202, His204, and Asn239 each coordinate Mn(2+). The regulatory domain stretch occupies residues 394 to 513 (RLLALSQHSE…SKAERVAAQG (120 aa)).

This sequence belongs to the alpha-IPM synthase/homocitrate synthase family. LeuA type 1 subfamily. Homodimer. It depends on Mn(2+) as a cofactor.

The protein localises to the cytoplasm. The enzyme catalyses 3-methyl-2-oxobutanoate + acetyl-CoA + H2O = (2S)-2-isopropylmalate + CoA + H(+). Its pathway is amino-acid biosynthesis; L-leucine biosynthesis; L-leucine from 3-methyl-2-oxobutanoate: step 1/4. In terms of biological role, catalyzes the condensation of the acetyl group of acetyl-CoA with 3-methyl-2-oxobutanoate (2-ketoisovalerate) to form 3-carboxy-3-hydroxy-4-methylpentanoate (2-isopropylmalate). In Leptothrix cholodnii (strain ATCC 51168 / LMG 8142 / SP-6) (Leptothrix discophora (strain SP-6)), this protein is 2-isopropylmalate synthase.